The primary structure comprises 103 residues: Putative RNA-binding protein RbpB (103 aa).

Residues 2-79 (SIYVGNLSYD…RDLKVNKAKP (78 aa)) enclose the RRM domain. A compositionally biased stretch (basic and acidic residues) spans 74-85 (VNKAKPREDRGG). Positions 74 to 103 (VNKAKPREDRGGSRGSFGGNRSNNNFRNRY) are disordered. Low complexity predominate over residues 92 to 103 (GNRSNNNFRNRY).

The polypeptide is Putative RNA-binding protein RbpB (rbpB) (Nostoc sp. (strain PCC 7120 / SAG 25.82 / UTEX 2576)).